We begin with the raw amino-acid sequence, 474 residues long: Glutathione synthetase (474 aa).

At Ala2 the chain carries N-acetylalanine. Arg125 provides a ligand contact to substrate. Glu144 is an ATP binding site. Mg(2+) contacts are provided by Glu144 and Asn146. Residues 148 to 151 (ISAS), 214 to 216 (ERN), Gln220, and 267 to 270 (RDGY) contribute to the substrate site. ATP-binding positions include Lys305, 364-373 (KPQREGGGNN), Tyr375, and 398-401 (MEKI). Glu368 is a Mg(2+) binding site. Ser415 bears the Phosphoserine mark. Position 425 (Glu425) interacts with ATP. Arg450 serves as a coordination point for substrate. Residues Lys452 and Asp458 each contribute to the ATP site. 461–462 (VA) is a substrate binding site.

This sequence belongs to the eukaryotic GSH synthase family. As to quaternary structure, homodimer. Requires Mg(2+) as cofactor.

It carries out the reaction gamma-L-glutamyl-L-cysteine + glycine + ATP = glutathione + ADP + phosphate + H(+). The enzyme catalyses gamma-L-glutamyl-(2S)-2-aminobutanoate + glycine + ATP = ophthalmate + ADP + phosphate + H(+). The protein operates within sulfur metabolism; glutathione biosynthesis; glutathione from L-cysteine and L-glutamate: step 2/2. Catalyzes the production of glutathione from gamma-glutamylcysteine and glycine in an ATP-dependent manner. Glutathione (gamma-glutamylcysteinylglycine, GSH) is the most abundant intracellular thiol in living aerobic cells and is required for numerous processes including the protection of cells against oxidative damage, amino acid transport, the detoxification of foreign compounds, the maintenance of protein sulfhydryl groups in a reduced state and acts as a cofactor for a number of enzymes. Participates in ophthalmate biosynthesis in hepatocytes. This is Glutathione synthetase from Rattus norvegicus (Rat).